Consider the following 126-residue polypeptide: Holo-[acyl-carrier-protein] synthase (126 aa).

Mg(2+) contacts are provided by Asp-9 and Glu-58.

Belongs to the P-Pant transferase superfamily. AcpS family. The cofactor is Mg(2+).

Its subcellular location is the cytoplasm. It carries out the reaction apo-[ACP] + CoA = holo-[ACP] + adenosine 3',5'-bisphosphate + H(+). Functionally, transfers the 4'-phosphopantetheine moiety from coenzyme A to a Ser of acyl-carrier-protein. The protein is Holo-[acyl-carrier-protein] synthase of Cronobacter sakazakii (strain ATCC BAA-894) (Enterobacter sakazakii).